The chain runs to 179 residues: Putative 5'(3')-deoxyribonucleotidase (179 aa).

Residue aspartate 9 is the Nucleophile of the active site. 3 residues coordinate Mg(2+): aspartate 9, aspartate 11, and aspartate 135. Aspartate 11 acts as the Proton donor in catalysis.

This sequence belongs to the 5'(3')-deoxyribonucleotidase family. It depends on Mg(2+) as a cofactor.

Dephosphorylates the 5' and 2'(3')-phosphates of deoxyribonucleotides. In Staphylococcus epidermidis (strain ATCC 12228 / FDA PCI 1200), this protein is Putative 5'(3')-deoxyribonucleotidase.